A 352-amino-acid chain; its full sequence is DNA polymerase IV (352 aa).

One can recognise a UmuC domain in the interval 4 to 185 (IIHVDMDCFY…LPLEKIPGVG (182 aa)). Residues Asp8 and Asp103 each coordinate Mg(2+). Residue Glu104 is part of the active site.

It belongs to the DNA polymerase type-Y family. Monomer. The cofactor is Mg(2+).

The protein localises to the cytoplasm. The enzyme catalyses DNA(n) + a 2'-deoxyribonucleoside 5'-triphosphate = DNA(n+1) + diphosphate. Its function is as follows. Poorly processive, error-prone DNA polymerase involved in untargeted mutagenesis. Copies undamaged DNA at stalled replication forks, which arise in vivo from mismatched or misaligned primer ends. These misaligned primers can be extended by PolIV. Exhibits no 3'-5' exonuclease (proofreading) activity. May be involved in translesional synthesis, in conjunction with the beta clamp from PolIII. In Pectobacterium atrosepticum (strain SCRI 1043 / ATCC BAA-672) (Erwinia carotovora subsp. atroseptica), this protein is DNA polymerase IV.